A 247-amino-acid chain; its full sequence is Probable transcriptional regulatory protein Dvul_0986 (247 aa).

The interval 1-22 is disordered; sequence MAGHSKWANIQHRKGRQDAKRG.

It belongs to the TACO1 family.

Its subcellular location is the cytoplasm. This is Probable transcriptional regulatory protein Dvul_0986 from Nitratidesulfovibrio vulgaris (strain DP4) (Desulfovibrio vulgaris).